Here is a 247-residue protein sequence, read N- to C-terminus: uncharacterized protein (247 aa).

The tract at residues 225–247 (LASAPVPPSGSGNSGHRRANLGL) is disordered.

This is an uncharacterized protein from Methanocaldococcus jannaschii (strain ATCC 43067 / DSM 2661 / JAL-1 / JCM 10045 / NBRC 100440) (Methanococcus jannaschii).